We begin with the raw amino-acid sequence, 469 residues long: GTPase Der (469 aa).

EngA-type G domains lie at 3–166 and 177–350; these read PVIA…PEDE and LRLA…ESAN. Residues 9-16, 56-60, 118-121, 183-190, 230-234, and 295-298 each bind GTP; these read GRPNVGKS, DTGGI, NKVD, DTAGV, and NKWD. The KH-like domain maps to 351 to 435; sequence LKVSPAKLTQ…PVKIEFKTSE (85 aa).

This sequence belongs to the TRAFAC class TrmE-Era-EngA-EngB-Septin-like GTPase superfamily. EngA (Der) GTPase family. In terms of assembly, associates with the 50S ribosomal subunit.

GTPase that plays an essential role in the late steps of ribosome biogenesis. This Acinetobacter baumannii (strain ACICU) protein is GTPase Der.